A 363-amino-acid chain; its full sequence is Protein LEG1 homolog (363 aa).

A signal peptide spans 1-19 (MQCVWTLSLLQLVALWANA). N-linked (GlcNAc...) asparagine glycosylation is found at asparagine 79, asparagine 261, and asparagine 292.

Belongs to the LEG1 family.

The protein localises to the secreted. In terms of biological role, may be involved in early liver development. This is Protein LEG1 homolog from Oncorhynchus mykiss (Rainbow trout).